A 230-amino-acid polypeptide reads, in one-letter code: Ion-translocating oxidoreductase complex subunit E (230 aa).

The next 6 helical transmembrane spans lie at 18–38 (ALVQ…ATNA), 39–59 (LGLG…ISTL), 63–83 (TPTE…VSAV), 86–106 (LINA…PLIV), 128–148 (ALDG…LGAM), and 182–202 (PFLL…MLAG).

It belongs to the NqrDE/RnfAE family. As to quaternary structure, the complex is composed of six subunits: RsxA, RsxB, RsxC, RsxD, RsxE and RsxG.

The protein localises to the cell inner membrane. In terms of biological role, part of a membrane-bound complex that couples electron transfer with translocation of ions across the membrane. Required to maintain the reduced state of SoxR. The protein is Ion-translocating oxidoreductase complex subunit E of Escherichia fergusonii (strain ATCC 35469 / DSM 13698 / CCUG 18766 / IAM 14443 / JCM 21226 / LMG 7866 / NBRC 102419 / NCTC 12128 / CDC 0568-73).